A 270-amino-acid chain; its full sequence is UPF0354 protein BCE_4835 (270 aa).

This sequence belongs to the UPF0354 family.

This chain is UPF0354 protein BCE_4835, found in Bacillus cereus (strain ATCC 10987 / NRS 248).